A 600-amino-acid polypeptide reads, in one-letter code: Elongation factor 4 (600 aa).

A tr-type G domain is found at 4 to 186; the sequence is KNVRNFCIIA…AIVNRIPPPK (183 aa). GTP is bound by residues 16 to 21 and 133 to 136; these read DHGKST and NKID.

This sequence belongs to the TRAFAC class translation factor GTPase superfamily. Classic translation factor GTPase family. LepA subfamily.

It localises to the cell inner membrane. It carries out the reaction GTP + H2O = GDP + phosphate + H(+). Its function is as follows. Required for accurate and efficient protein synthesis under certain stress conditions. May act as a fidelity factor of the translation reaction, by catalyzing a one-codon backward translocation of tRNAs on improperly translocated ribosomes. Back-translocation proceeds from a post-translocation (POST) complex to a pre-translocation (PRE) complex, thus giving elongation factor G a second chance to translocate the tRNAs correctly. Binds to ribosomes in a GTP-dependent manner. The chain is Elongation factor 4 from Aquifex aeolicus (strain VF5).